The primary structure comprises 367 residues: Anhydro-N-acetylmuramic acid kinase (367 aa).

Gly-13 to Asp-20 provides a ligand contact to ATP.

Belongs to the anhydro-N-acetylmuramic acid kinase family.

The enzyme catalyses 1,6-anhydro-N-acetyl-beta-muramate + ATP + H2O = N-acetyl-D-muramate 6-phosphate + ADP + H(+). The protein operates within amino-sugar metabolism; 1,6-anhydro-N-acetylmuramate degradation. It functions in the pathway cell wall biogenesis; peptidoglycan recycling. In terms of biological role, catalyzes the specific phosphorylation of 1,6-anhydro-N-acetylmuramic acid (anhMurNAc) with the simultaneous cleavage of the 1,6-anhydro ring, generating MurNAc-6-P. Is required for the utilization of anhMurNAc either imported from the medium or derived from its own cell wall murein, and thus plays a role in cell wall recycling. This Neisseria meningitidis serogroup A / serotype 4A (strain DSM 15465 / Z2491) protein is Anhydro-N-acetylmuramic acid kinase.